A 746-amino-acid chain; its full sequence is H(+)/Cl(-) exchange transporter 5 (746 aa).

At methionine 1–alanine 54 the chain is on the cytoplasmic side. Transmembrane regions (helical) follow at residues phenylalanine 55–glutamate 92 and valine 138–phenylalanine 161. The Selectivity filter part_1 motif lies at glycine 167 to proline 171. Serine 168 is a chloride binding site. An intramembrane region (helical) is located at residues isoleucine 170 to leucine 177. A run of 2 helical transmembrane segments spans residues leucine 186–glycine 205 and glutamate 211–asparagine 230. The Selectivity filter part_2 signature appears at glycine 209–proline 213. 2 intramembrane regions (helical) span residues valine 242–alanine 254 and proline 258–leucine 266. 5 helical membrane-spanning segments follow: residues leucine 278–asparagine 296, leucine 319–cysteine 344, leucine 352–phenylalanine 372, methionine 428–methionine 448, and glycine 453–glycine 472. Residues glycine 453–proline 457 carry the Selectivity filter part_3 motif. Phenylalanine 455 contributes to the chloride binding site. The segment at residues glycine 500–valine 514 is an intramembrane region (helical). An intramembrane region (note=Loop between two helices) is located at residues threonine 515 to methionine 517. The helical intramembrane region spans threonine 518–threonine 529. The note=Loop between two helices intramembrane region spans glycine 530–tyrosine 534. Residues isoleucine 535–leucine 552 traverse the membrane as a helical segment. Over glycine 553–asparagine 746 the chain is Cytoplasmic. Tyrosine 558 contributes to the chloride binding site. CBS domains lie at methionine 586–glutamate 650 and isoleucine 682–serine 742. Residues threonine 596, tyrosine 617–glycine 619, and threonine 724–aspartate 727 each bind ATP.

Belongs to the chloride channel (TC 2.A.49) family. ClC-5/CLCN5 subfamily. In terms of assembly, interacts with NEDD4 and NEDD4L. Ubiquitinated by NEDD4L in the presence of albumin; which promotes endocytosis and proteasomal degradation. As to expression, detected in duodenum, jejunum and ileum. Detected in crypt and villus regions of the epithelium of the small intestine.

The protein resides in the golgi apparatus membrane. The protein localises to the endosome membrane. It localises to the cell membrane. It carries out the reaction 2 chloride(in) + H(+)(out) = 2 chloride(out) + H(+)(in). Proton-coupled chloride transporter. Functions as antiport system and exchanges chloride ions against protons. Important for normal acidification of the endosome lumen. May play an important role in renal tubular function. The CLC channel family contains both chloride channels and proton-coupled anion transporters that exchange chloride or another anion for protons. The absence of conserved gating glutamate residues is typical for family members that function as channels. In Cavia porcellus (Guinea pig), this protein is H(+)/Cl(-) exchange transporter 5 (CLCN5).